A 1392-amino-acid polypeptide reads, in one-letter code: ATP-dependent helicase/nuclease subunit A (1392 aa).

Residues 3–489 (NPKWTPAQQA…IDLNQNFRSR (487 aa)) enclose the UvrD-like helicase ATP-binding domain. 24–31 (AAAGSGKT) provides a ligand contact to ATP. Disordered stretches follow at residues 291–319 (RGSKKNLPDSLIDEENSKRLREESKKARD), 555–594 (KRGAEDAATEVDSPAKGEGEEFEQNREPESGDDESSLEEA), and 1051–1126 (GPVQ…LDTK). 2 stretches are compositionally biased toward basic and acidic residues: residues 305 to 319 (ENSKRLREESKKARD) and 567 to 583 (SPAKGEGEEFEQNREPE). A UvrD-like helicase C-terminal domain is found at 556–886 (RGAEDAATEV…RFITVHSSKG (331 aa)). Acidic residues predominate over residues 584–594 (SGDDESSLEEA). Basic and acidic residues predominate over residues 1088-1113 (ASGKTEIPGETKNSEETKTSEDKKNL).

It belongs to the helicase family. AddA subfamily. In terms of assembly, heterodimer of AddA and AddB/RexB. The cofactor is Mg(2+).

It catalyses the reaction Couples ATP hydrolysis with the unwinding of duplex DNA by translocating in the 3'-5' direction.. The enzyme catalyses ATP + H2O = ADP + phosphate + H(+). The heterodimer acts as both an ATP-dependent DNA helicase and an ATP-dependent, dual-direction single-stranded exonuclease. Recognizes the chi site generating a DNA molecule suitable for the initiation of homologous recombination. The AddA nuclease domain is required for chi fragment generation; this subunit has the helicase and 3' -&gt; 5' nuclease activities. This chain is ATP-dependent helicase/nuclease subunit A, found in Desulfitobacterium hafniense (strain DSM 10664 / DCB-2).